The primary structure comprises 975 residues: Chromosome transmission fidelity protein 18 homolog (975 aa).

Disordered stretches follow at residues E30–V83 and S114–E141. Position 51 is a phosphothreonine (T51). Low complexity predominate over residues R58 to G77. S64 is modified (phosphoserine). The segment covering P122–P136 has biased composition (pro residues). S225 carries the phosphoserine modification. 2 disordered regions span residues S246–A276 and R320–S346. G374–T381 lines the ATP pocket. The tract at residues A858 to E896 is disordered. Residue S871 is modified to Phosphoserine.

It belongs to the activator 1 small subunits family. CTF18 subfamily. In terms of assembly, component of the CTF18-RFC complex, which consists of CTF18, CTF8, DCC1, RFC2, RFC3, RFC4 and RFC5. During assembly of the CTF18-RFC complex, CTF18 may first assemble into a subcomplex with RFC2, RFC3, RFC4 and RFC5. CTF18 then interacts directly with CTF8, which in turn interacts with DCC1. The CTF18-RFC complex associates with PCNA and with DNA polymerase POLH. The CTF18-RFC complex does not interact with the Rad9/Rad1/Hus1 complex. CTF18 interacts with SMC1A and RAD21. Interacts with DDX11.

It localises to the nucleus. In terms of biological role, chromosome cohesion factor involved in sister chromatid cohesion and fidelity of chromosome transmission. Component of one of the cell nuclear antigen loader complexes, CTF18-replication factor C (CTF18-RFC), which consists of CTF18, CTF8, DCC1, RFC2, RFC3, RFC4 and RFC5. The CTF18-RFC complex binds to single-stranded and primed DNAs and has weak ATPase activity that is stimulated by the presence of primed DNA, replication protein A (RPA) and by proliferating cell nuclear antigen (PCNA). The CTF18-RFC complex catalyzes the ATP-dependent loading of PCNA onto primed and gapped DNA. Interacts with and stimulates DNA polymerase POLH. During DNA repair synthesis, involved in loading DNA polymerase POLE at the sites of local damage. The chain is Chromosome transmission fidelity protein 18 homolog (CHTF18) from Homo sapiens (Human).